A 357-amino-acid chain; its full sequence is Cytosolic Fe-S cluster assembly factor NAR1 (357 aa).

The [4Fe-4S] cluster site is built by cysteine 14, cysteine 28, cysteine 31, cysteine 34, cysteine 129, cysteine 172, cysteine 297, and cysteine 301.

It belongs to the NARF family.

In terms of biological role, component of the cytosolic Fe/S protein assembly machinery. May play a role in the transfer of pre-assembled Fe/S clusters to target apoproteins. The protein is Cytosolic Fe-S cluster assembly factor NAR1 (NAR1) of Encephalitozoon cuniculi (strain GB-M1) (Microsporidian parasite).